The following is a 376-amino-acid chain: Transcription factor Sp6 (376 aa).

Residues 1 to 70 (MLTAVCGSLG…VDFSQGYELP (70 aa)) are disordered. The short motif at 118–126 (GSWWDLHPG) is the 9aaTAD element. A disordered region spans residues 167-223 (HPHAHHLLPAAGGQHLLGPPDGAKALEVAAPESQGLDSSLDGAARPKGSRRSVPRSS). A compositionally biased stretch (low complexity) spans 173–186 (LLPAAGGQHLLGPP). 3 consecutive C2H2-type zinc fingers follow at residues 254 to 278 (HNCHIPGCGKAYAKTSHLKAHLRWH), 284 to 308 (FVCNWLFCGKRFTRSDELQRHLQTH), and 314 to 336 (FPCAVCSRVFMRSDHLAKHMKTH). Basic and acidic residues predominate over residues 333–343 (MKTHEGAKEEA). The interval 333-376 (MKTHEGAKEEAAGAASGEGKAGGAVEPPGGKGKREAEGSVAPSN) is disordered.

It belongs to the Sp1 C2H2-type zinc-finger protein family. As to expression, ubiquitous.

The protein resides in the nucleus. In terms of biological role, promotes cell proliferation. Plays a role in tooth germ growth. Plays a role in the control of enamel mineralization. Binds the AMBN promoter. This is Transcription factor Sp6 (SP6) from Homo sapiens (Human).